The sequence spans 181 residues: uncharacterized protein (181 aa).

In terms of domain architecture, Nudix hydrolase spans 35–175 (LRHRCVFVWA…ARLRAWRGAS (141 aa)). Residues 72-94 (GGVVGAGESYDDAALREAEEELG) carry the Nudix box motif. Glutamate 88 and glutamate 92 together coordinate Mg(2+).

Belongs to the Nudix hydrolase family. The cofactor is Mg(2+).

This is an uncharacterized protein from Streptomyces coelicolor (strain ATCC BAA-471 / A3(2) / M145).